The following is a 734-amino-acid chain: Photosystem I P700 chlorophyll a apoprotein A2 (734 aa).

8 helical membrane passes run 46–69 (IFAS…FHVA), 135–158 (LYTG…LHLQ), 175–199 (LNHH…HVAI), 273–291 (MAHH…GHMY), 330–353 (LHFQ…QHMY), 369–395 (AALY…IFFI), 417–439 (AIIS…LYVH), and 517–535 (FLVH…LILV). [4Fe-4S] cluster-binding residues include Cys-559 and Cys-568. 2 consecutive transmembrane segments (helical) span residues 575 to 596 (AFYL…YWHW) and 643 to 665 (LSVW…MFLI). Chlorophyll a-binding residues include His-654, Met-662, and Tyr-670. Trp-671 is a phylloquinone binding site. Residues 707–727 (LVGLAHFSVGYIFTYAAFLIA) traverse the membrane as a helical segment.

The protein belongs to the PsaA/PsaB family. The PsaA/B heterodimer binds the P700 chlorophyll special pair and subsequent electron acceptors. PSI consists of a core antenna complex that captures photons, and an electron transfer chain that converts photonic excitation into a charge separation. The eukaryotic PSI reaction center is composed of at least 11 subunits. P700 is a chlorophyll a/chlorophyll a' dimer, A0 is one or more chlorophyll a, A1 is one or both phylloquinones and FX is a shared 4Fe-4S iron-sulfur center. is required as a cofactor.

It localises to the plastid. The protein resides in the chloroplast thylakoid membrane. It carries out the reaction reduced [plastocyanin] + hnu + oxidized [2Fe-2S]-[ferredoxin] = oxidized [plastocyanin] + reduced [2Fe-2S]-[ferredoxin]. Its function is as follows. PsaA and PsaB bind P700, the primary electron donor of photosystem I (PSI), as well as the electron acceptors A0, A1 and FX. PSI is a plastocyanin-ferredoxin oxidoreductase, converting photonic excitation into a charge separation, which transfers an electron from the donor P700 chlorophyll pair to the spectroscopically characterized acceptors A0, A1, FX, FA and FB in turn. Oxidized P700 is reduced on the lumenal side of the thylakoid membrane by plastocyanin. The protein is Photosystem I P700 chlorophyll a apoprotein A2 of Cucumis sativus (Cucumber).